Consider the following 312-residue polypeptide: Glyoxylate/hydroxypyruvate reductase A (312 aa).

Residue Arg227 is part of the active site. The active-site Proton donor is His275.

This sequence belongs to the D-isomer specific 2-hydroxyacid dehydrogenase family. GhrA subfamily.

The protein localises to the cytoplasm. It carries out the reaction glycolate + NADP(+) = glyoxylate + NADPH + H(+). The catalysed reaction is (R)-glycerate + NAD(+) = 3-hydroxypyruvate + NADH + H(+). The enzyme catalyses (R)-glycerate + NADP(+) = 3-hydroxypyruvate + NADPH + H(+). Its function is as follows. Catalyzes the NADPH-dependent reduction of glyoxylate and hydroxypyruvate into glycolate and glycerate, respectively. The polypeptide is Glyoxylate/hydroxypyruvate reductase A (Escherichia coli O7:K1 (strain IAI39 / ExPEC)).